We begin with the raw amino-acid sequence, 925 residues long: Nuclear pore complex protein Nup107 (925 aa).

Met-1 carries the N-acetylmethionine modification. Ser-4, Ser-10, Ser-11, and Ser-37 each carry phosphoserine. Positions 20–66 are disordered; the sequence is TRTARKQSAQKRVLLQASQDENFGNTTPRNQVIPRTPSSFRQPFTPT. Polar residues-rich tracts occupy residues 35 to 49 and 55 to 66; these read QASQDENFGNTTPRN and TPSSFRQPFTPT. 2 positions are modified to phosphothreonine: Thr-46 and Thr-55. 2 positions are modified to phosphoserine: Ser-57 and Ser-58. Arg-60 carries the asymmetric dimethylarginine; alternate modification. Omega-N-methylarginine; alternate is present on Arg-60. Thr-64 is subject to Phosphothreonine. Residue Arg-68 is modified to Omega-N-methylarginine. Ser-69 and Ser-86 each carry phosphoserine.

Belongs to the nucleoporin Nup84/Nup107 family. In terms of assembly, part of the nuclear pore complex (NPC). Forms part of the Nup160 subcomplex in the nuclear pore which is composed of NUP160, NUP133, NUP107 and Nup96; this complex plays a role in RNA export and in tethering Nup98 and NUP153 to the nucleus. Does not interact with TPR. Interacts with ZNF106. As to expression, ubiquitously expressed in fetal and adult tissues.

The protein resides in the nucleus membrane. It localises to the nucleus. The protein localises to the nuclear pore complex. Its subcellular location is the chromosome. It is found in the centromere. The protein resides in the kinetochore. Plays a role in the nuclear pore complex (NPC) assembly and/or maintenance. Required for the assembly of peripheral proteins into the NPC. May anchor NUP62 to the NPC. Involved in nephrogenesis. The chain is Nuclear pore complex protein Nup107 (NUP107) from Homo sapiens (Human).